The sequence spans 95 residues: Co-chaperonin GroES (95 aa).

It belongs to the GroES chaperonin family. As to quaternary structure, heptamer of 7 subunits arranged in a ring. Interacts with the chaperonin GroEL.

It localises to the cytoplasm. Together with the chaperonin GroEL, plays an essential role in assisting protein folding. The GroEL-GroES system forms a nano-cage that allows encapsulation of the non-native substrate proteins and provides a physical environment optimized to promote and accelerate protein folding. GroES binds to the apical surface of the GroEL ring, thereby capping the opening of the GroEL channel. This Zymomonas mobilis subsp. mobilis (strain ATCC 31821 / ZM4 / CP4) protein is Co-chaperonin GroES.